The primary structure comprises 172 residues: MPLRASEHAYRPLGPGTPPMRARLPAAAWVGVGTIIGGVVIIAALVLVPSRASWALSPCDSGWHEFNLGCISWDPTPMEHEQAVGGCSAPATLIPRAAAKQLAAVARVQSARSSGYWWVSGDGIRACLRLVDGVGGIDQFCEEPALRICYYPRSPGGFVQFVTSTRNALGLP.

The Intravirion segment spans residues methionine 1–alanine 27. Residues alanine 28 to valine 48 form a helical; Signal-anchor for type II membrane protein membrane-spanning segment. Residues proline 49 to proline 172 lie on the Virion surface side of the membrane.

It belongs to the herpesviridae HHV-1 UL45 family.

It is found in the virion membrane. Functionally, important virulence factor of HSV neurotropism. Seems to be required for glycoprotein B-induced fusion. Dispensable for growth in vitro. The sequence is that of Envelope protein UL45 from Human herpesvirus 1 (strain 17) (HHV-1).